The chain runs to 118 residues: Large ribosomal subunit protein bL17 (118 aa).

Belongs to the bacterial ribosomal protein bL17 family. Part of the 50S ribosomal subunit. Contacts protein L32.

This is Large ribosomal subunit protein bL17 from Campylobacter concisus (strain 13826).